The following is a 117-amino-acid chain: Snaclec CHH-B subunit beta (117 aa).

3 disulfides stabilise this stretch: Cys-2–Cys-13, Cys-30–Cys-115, and Cys-92–Cys-107. In terms of domain architecture, C-type lectin spans 9–116 (YEGHCYRVFQ…CSKTHNVVCK (108 aa)).

The protein belongs to the snaclec family. In terms of assembly, heterodimer of subunits alpha and beta; disulfide-linked. Expressed by the venom gland.

Its subcellular location is the secreted. Binds to the subunit GPIbalpha (GP1BA) of the platelet GPIb/V/IX receptor system. It inhibits ristocetin- and vWF-induced platelet aggregation in platelet-rich plasma by inhibiting the binding of vWF to GPIbalpha. In Crotalus horridus (Timber rattlesnake), this protein is Snaclec CHH-B subunit beta.